Reading from the N-terminus, the 84-residue chain is MSEQTRIQLGRVISSKMDKSIVVAIERMVKHPMYGKYIKRTTKLHAHDENNECNLGDTVEVRECRPLSKTKSWTLVRIVEKARV.

It belongs to the universal ribosomal protein uS17 family. In terms of assembly, part of the 30S ribosomal subunit.

Its function is as follows. One of the primary rRNA binding proteins, it binds specifically to the 5'-end of 16S ribosomal RNA. The chain is Small ribosomal subunit protein uS17 from Photobacterium profundum (strain SS9).